Reading from the N-terminus, the 100-residue chain is Chorion class A protein M2774 (100 aa).

The interval 1–33 (GGGWNGWNGLGGGWNGLGVGWSRLDGGYGGGCG) is left arm. The interval 34–81 (SYGGEGIGNVGVADELPVGGVTAVGGRVPIIGGVEYGGPARAAGAVSI) is central domain. The tract at residues 82–100 (CGHCAPTCGCGRAGLGGYY) is right arm.

This sequence belongs to the chorion protein family.

This protein is one of many from the eggshell of the silk moth. The chain is Chorion class A protein M2774 from Bombyx mori (Silk moth).